The following is a 366-amino-acid chain: Ribosomal RNA small subunit methyltransferase H 1 (366 aa).

Residues 1 to 46 form a disordered region; that stretch reads MADQNINKNEKVLTGQPTENQEPVHKRRERYKGTHPKTFKEKYKER. Basic residues predominate over residues 25–37; it reads HKRRERYKGTHPK. S-adenosyl-L-methionine-binding positions include 97-99, aspartate 117, phenylalanine 147, aspartate 166, and glutamine 173; that span reads GGH.

This sequence belongs to the methyltransferase superfamily. RsmH family.

It is found in the cytoplasm. It catalyses the reaction cytidine(1402) in 16S rRNA + S-adenosyl-L-methionine = N(4)-methylcytidine(1402) in 16S rRNA + S-adenosyl-L-homocysteine + H(+). Specifically methylates the N4 position of cytidine in position 1402 (C1402) of 16S rRNA. The polypeptide is Ribosomal RNA small subunit methyltransferase H 1 (Lachnoclostridium phytofermentans (strain ATCC 700394 / DSM 18823 / ISDg) (Clostridium phytofermentans)).